The following is a 248-amino-acid chain: NADP-dependent 3-hydroxy acid dehydrogenase YdfG (248 aa).

NADP(+) is bound by residues 7 to 12 (GATAGF), 32 to 33 (RR), 54 to 55 (DV), and N81. S134 serves as a coordination point for substrate. Residues Y147, K151, and 177–185 (PGLVGGTEF) each bind NADP(+). Y147 acts as the Proton acceptor in catalysis.

Belongs to the short-chain dehydrogenases/reductases (SDR) family. Homotetramer.

It catalyses the reaction 3-hydroxypropanoate + NADP(+) = 3-oxopropanoate + NADPH + H(+). The enzyme catalyses L-allo-threonine + NADP(+) = aminoacetone + CO2 + NADPH. Its function is as follows. NADP-dependent dehydrogenase with broad substrate specificity acting on 3-hydroxy acids. Catalyzes the NADP-dependent oxidation of L-allo-threonine to L-2-amino-3-keto-butyrate, which is spontaneously decarboxylated into aminoacetone. Also acts on D-threonine, L-serine, D-serine, D-3-hydroxyisobutyrate, L-3-hydroxyisobutyrate, D-glycerate and L-glycerate. Able to catalyze the reduction of the malonic semialdehyde to 3-hydroxypropionic acid. YdfG is apparently supplementing RutE, the presumed malonic semialdehyde reductase involved in pyrimidine degradation since both are able to detoxify malonic semialdehyde. The polypeptide is NADP-dependent 3-hydroxy acid dehydrogenase YdfG (Shigella flexneri).